Reading from the N-terminus, the 305-residue chain is Peroxidase A2 (305 aa).

Q1 carries the post-translational modification Pyrrolidone carboxylic acid. N3 and N13 each carry an N-linked (GlcNAc...) asparagine glycan. 4 cysteine pairs are disulfide-bonded: C11-C91, C44-C49, C97-C299, and C176-C208. H42 functions as the Proton acceptor in the catalytic mechanism. Ca(2+)-binding residues include D43, V46, G48, D50, and S52. P139 serves as a coordination point for substrate. An N-linked (GlcNAc...) asparagine glycan is attached at N147. Residue H169 coordinates heme b. T170 contributes to the Ca(2+) binding site. 3 N-linked (GlcNAc...) asparagine glycosylation sites follow: N185, N197, and N211. Positions 221, 224, and 229 each coordinate Ca(2+). N267 is a glycosylation site (N-linked (GlcNAc...) asparagine).

The protein belongs to the peroxidase family. Classical plant (class III) peroxidase subfamily. The cofactor is Ca(2+). Requires heme b as cofactor.

The catalysed reaction is 2 a phenolic donor + H2O2 = 2 a phenolic radical donor + 2 H2O. Its function is as follows. Removal of H(2)O(2), oxidation of toxic reductants, biosynthesis and degradation of lignin, suberization, auxin catabolism, response to environmental stresses such as wounding, pathogen attack and oxidative stress. These functions might be dependent on each isozyme/isoform in each plant tissue. This Armoracia rusticana (Horseradish) protein is Peroxidase A2 (HRPA2).